The primary structure comprises 180 residues: Putative adenylate kinase (180 aa).

ATP is bound by residues Gly10, Gly12, Lys13, Thr14, and Thr15. The NMP stretch occupies residues 30–50; it reads NLRDFALEKGIGEVKGDELEV. Positions 99-109 are LID; the sequence is ERGYSKDKIGE. ATP is bound by residues Arg100 and Lys138.

It belongs to the adenylate kinase family. AK6 subfamily. Interacts with uS11. Not a structural component of 40S pre-ribosomes, but transiently interacts with them by binding to uS11.

It carries out the reaction AMP + ATP = 2 ADP. The catalysed reaction is ATP + H2O = ADP + phosphate + H(+). Broad-specificity nucleoside monophosphate (NMP) kinase that catalyzes the reversible transfer of the terminal phosphate group between nucleoside triphosphates and monophosphates. Also has ATPase activity. Involved in the late maturation steps of the 30S ribosomal particles, specifically 16S rRNA maturation. While NMP activity is not required for ribosome maturation, ATPase activity is. Associates transiently with small ribosomal subunit protein uS11. ATP hydrolysis breaks the interaction with uS11. May temporarily remove uS11 from the ribosome to enable a conformational change of the ribosomal RNA that is needed for the final maturation step of the small ribosomal subunit. This is Putative adenylate kinase from Pyrococcus furiosus (strain ATCC 43587 / DSM 3638 / JCM 8422 / Vc1).